We begin with the raw amino-acid sequence, 116 residues long: Large ribosomal subunit protein bL19 (116 aa).

It belongs to the bacterial ribosomal protein bL19 family.

In terms of biological role, this protein is located at the 30S-50S ribosomal subunit interface and may play a role in the structure and function of the aminoacyl-tRNA binding site. The polypeptide is Large ribosomal subunit protein bL19 (rplS) (Geobacillus stearothermophilus (Bacillus stearothermophilus)).